A 158-amino-acid chain; its full sequence is Ribosome maturation factor RimP (158 aa).

It belongs to the RimP family.

The protein localises to the cytoplasm. Required for maturation of 30S ribosomal subunits. The polypeptide is Ribosome maturation factor RimP (Lactobacillus acidophilus (strain ATCC 700396 / NCK56 / N2 / NCFM)).